The sequence spans 262 residues: ATP synthase subunit a (262 aa).

The next 5 helical transmembrane spans lie at 25 to 45 (NVHI…LAVF), 86 to 106 (VAPL…IDLI), 130 to 150 (DISA…FYTV), 204 to 226 (LIFI…GIPL), and 240 to 260 (LQAF…YNKA).

It belongs to the ATPase A chain family. As to quaternary structure, F-type ATPases have 2 components, CF(1) - the catalytic core - and CF(0) - the membrane proton channel. CF(1) has five subunits: alpha(3), beta(3), gamma(1), delta(1), epsilon(1). CF(0) has three main subunits: a(1), b(2) and c(9-12). The alpha and beta chains form an alternating ring which encloses part of the gamma chain. CF(1) is attached to CF(0) by a central stalk formed by the gamma and epsilon chains, while a peripheral stalk is formed by the delta and b chains.

Its subcellular location is the cell inner membrane. Key component of the proton channel; it plays a direct role in the translocation of protons across the membrane. This is ATP synthase subunit a from Mannheimia succiniciproducens (strain KCTC 0769BP / MBEL55E).